A 303-amino-acid chain; its full sequence is MEGLVNNSGDKDLDEKLLQPFTYILQVPGKQIRAKLAHAFNYWLKIPNDKLNIVGEIIQMLHNSSLLIDDIQDNSILRRGIPVAHSIYGVASTINAANYVIFLAVEKVLRLEHPEATRVCIDQLLELHRGQGIEIYWRDNFQCPSEDEYKLMTIRKTGGLFMLAIRLMQLFSESDADFTKLAGILGLYFQIRDDYCNLCLQEYSENKSFCEDLTEGKFSFPIIHAIRSRPDDRQVIQILRQRTRDVEVKKYCVTLLEKFGSFSHTRETLAQLDREAREEVARLGGNPFLEAILNDLLNWDRTK.

The Mg(2+) site is built by Asp-69 and Asp-73. A DDXXD motif motif is present at residues 69-73; that stretch reads DDIQD.

It belongs to the FPP/GGPP synthase family. Mg(2+) is required as a cofactor.

The enzyme catalyses (2E)-geranyl diphosphate + H2O = (2E)-geraniol + diphosphate. Functionally, terpene synthase that is able to convert geraniol diphosphate to geraniol in tea leaves. The protein is Terpene synthase of Matsumurasca onukii (Tea green leafhopper).